The following is a 111-amino-acid chain: Putative lipid-binding protein AIR1 (111 aa).

An N-terminal signal peptide occupies residues 1–23 (MAPRTPLALFVSLNLLFFTYTSA). Disulfide bonds link Cys-28-Cys-58, Cys-38-Cys-57, and Cys-74-Cys-110.

Belongs to the plant LTP family. PEARLI1 subfamily.

It localises to the secreted. This is Putative lipid-binding protein AIR1 (AIR1) from Arabidopsis thaliana (Mouse-ear cress).